A 71-amino-acid polypeptide reads, in one-letter code: Small ribosomal subunit protein bS21 (71 aa).

This sequence belongs to the bacterial ribosomal protein bS21 family.

This Thioalkalivibrio sulfidiphilus (strain HL-EbGR7) protein is Small ribosomal subunit protein bS21.